Here is a 724-residue protein sequence, read N- to C-terminus: DNA ligase (724 aa).

NAD(+)-binding positions include Asp-44–Asp-48, Ser-93–Leu-94, and Glu-127. Lys-129 serves as the catalytic N6-AMP-lysine intermediate. Residues Arg-150, Glu-186, Lys-307, and Lys-331 each contribute to the NAD(+) site. The Zn(2+) site is built by Cys-437, Cys-440, Cys-461, and Cys-467. Positions Thr-646–Gly-724 constitute a BRCT domain.

This sequence belongs to the NAD-dependent DNA ligase family. LigA subfamily. The cofactor is Mg(2+). It depends on Mn(2+) as a cofactor.

The catalysed reaction is NAD(+) + (deoxyribonucleotide)n-3'-hydroxyl + 5'-phospho-(deoxyribonucleotide)m = (deoxyribonucleotide)n+m + AMP + beta-nicotinamide D-nucleotide.. Its function is as follows. DNA ligase that catalyzes the formation of phosphodiester linkages between 5'-phosphoryl and 3'-hydroxyl groups in double-stranded DNA using NAD as a coenzyme and as the energy source for the reaction. It is essential for DNA replication and repair of damaged DNA. This chain is DNA ligase, found in Agrobacterium fabrum (strain C58 / ATCC 33970) (Agrobacterium tumefaciens (strain C58)).